A 263-amino-acid chain; its full sequence is tRNA uridine(34) hydroxylase (263 aa).

The 95-residue stretch at 129–223 (EGREVVTLDT…YFEETDGAFY (95 aa)) folds into the Rhodanese domain. Cysteine 183 serves as the catalytic Cysteine persulfide intermediate.

Belongs to the TrhO family.

It catalyses the reaction uridine(34) in tRNA + AH2 + O2 = 5-hydroxyuridine(34) in tRNA + A + H2O. Catalyzes oxygen-dependent 5-hydroxyuridine (ho5U) modification at position 34 in tRNAs. This chain is tRNA uridine(34) hydroxylase, found in Delftia acidovorans (strain DSM 14801 / SPH-1).